The following is a 165-amino-acid chain: Cyanate hydratase (165 aa).

A disordered region spans residues 1–20 (MAQNKANTVSQLQSLKNKSG). Residues arginine 90, glutamate 93, and serine 116 contribute to the active site.

Belongs to the cyanase family.

The enzyme catalyses cyanate + hydrogencarbonate + 3 H(+) = NH4(+) + 2 CO2. Catalyzes the reaction of cyanate with bicarbonate to produce ammonia and carbon dioxide. This Medicago truncatula (Barrel medic) protein is Cyanate hydratase.